Reading from the N-terminus, the 343-residue chain is F-box/kelch-repeat protein At3g08810 (343 aa).

The span at 1 to 15 (MSYPERKRKRSRWSK) shows a compositional bias: basic residues. The disordered stretch occupies residues 1–25 (MSYPERKRKRSRWSKPHSTQNPSPS). One can recognise an F-box domain in the interval 20–66 (QNPSPSLPDDVLLSIFARVSRLYYPTLSHVSESFRSLLASPELYKAR). Kelch repeat units lie at residues 134 to 181 (DIYN…VRDG), 183 to 224 (QGGH…LPDS), and 225 to 271 (YCVI…VILA).

In Arabidopsis thaliana (Mouse-ear cress), this protein is F-box/kelch-repeat protein At3g08810.